The primary structure comprises 1592 residues: MAFWLPQNIQKRLLLYVLQQISLFSNIDLSNLDVSIGSKSHFSFHDVNLSLDDLNIPNVQINEGIVDELVLKLTVSGGVEIDGSGLRFIMTPLYSSGSQELHSDFLVKSIQDLTNSMLQFSDPLTTYNRYKEDDISSSDSSSDLNSNIEASKPAANGSYTLQNMRNKALNVALAKLKIALKDVTIRFIVNDRDPSDNIVEVHLESIQLITTDANLRHINIENITISSIQKQAVPDSPVHPFNNDDLSQSVYLSKMEATSLYMSAMEEQSNEDPSEPQVTQEEQENDKCKESLMEINNLNIAFKGLSSVNDLRMSNIVIDIQDVHLAIHKIVEIKNSTLKNIIDIIVTHLDANESFSCQDSQSPSPDKQEPSALSSVDIKCIYLNLGQDITVILKSFKLEQKENNSLAFSLGSFYSNSSPLTISHKTKPLLTGEQTPQSIALNMGDELDIIISHDGIAHFFKIFQFVSKCMSFYQNKSKGMMPQIASDTKRTVQLTSKAVKLSLKFPYFLLCFQVSPFIYDSNRELYIELVDVFKKLPSRCTKILTMSSITISNLQSPLQLGSYDDTLKEALIYSSVHAIIKEVIFNEEYSGIVQLVEDISAFGKLFTDSKNSECTGKSKSKRGSFLQRSVRVLNSSRFVYKQSLSANFSLKIDSMKLKVSEIIGPQFGSVEALLSNNFFAITDDSQIVYFTKNLKVERKTPSLLEPQEIMSVVLNKAVNEPVLYVHRRANGKLKVIFNNIRIHYYARWLEILKKNIGPDNASSKDEPVAQKLSKKQPTSGFPWELKCLDCSLILHPFRLKSVMVIVLDNLTTGGSSFIPQAKLLSKANTLFLIDDYQNFKIQKDKNWPSLINFYAGQGFSAIGKIDTLNFLINKSDGALLLDCKIEQVGLSLCADSFQTFCQLCIDLKYPQTFPDEEKFRTQLKNPIDVFKDIDCDLFNSAFIRENNHQNDYDSVHLVDSFLDKTHEFNNGARSKLSSQGSYEMDSSSGTATGGILLPHESYLDSAQPKEEDTPPIASKEQERDVDIRGSIDIEKVVIKLFDGYDWKYTRKFIANTVEKLDKELSKAEASSSKSNVPQSEANIFDSIYISANKNNVTDLRRNLDGEIQGVQNSFSDVSKVNLRPSKHYKALIQLNKVHVNLKNYRVDEPDESNSDNSTDVLNRCVVSVYEFEIIDNVPTSTWNKFVTLLKHEPWPHSSPMFLLDLEFIRPIDFLQAVELVMQLNVAPLRLHVDQDTLEFLIRFLGFKDKRFELIDEYPDIVFIQKFSTNSIKLRLDYKPKKVDYAGLRSGQTSELMNFFTLDGSKIILKSVVLYGLNGFDELNNKLKAIWTPDITKKQLPGVLEGLAPVRSFMAIGSGVKTLVTVLMSEYRQEGHLGRSLKKGGNVFLKTTTGDFVKLGVKLTSGTQAILENTEELFGGVGSNGRVYDASKFGSADGADSDTAAVLDLDTLFEEDQLVGSKYSRIRDHEPTAVVIDMSSPGDHNEPTIVSLYADQPLDLPTGLKEAYSSLEKHMHIAYDAVWRAKGQMKDDKRGGPSAAAVYVARAAPVAIIRPLIGATEAVSKTLQGIANQVDKTHNEQINDKYKSNRTDS.

Serine 236 carries the post-translational modification Phosphoserine. Positions 264 to 286 (AMEEQSNEDPSEPQVTQEEQEND) are disordered.

The protein belongs to the ATG2 family.

It localises to the preautophagosomal structure membrane. The protein localises to the endoplasmic reticulum membrane. It catalyses the reaction a 1,2-diacyl-sn-glycero-3-phosphocholine(in) = a 1,2-diacyl-sn-glycero-3-phosphocholine(out). The enzyme catalyses a 1,2-diacyl-sn-glycero-3-phospho-L-serine(in) = a 1,2-diacyl-sn-glycero-3-phospho-L-serine(out). It carries out the reaction a 1,2-diacyl-sn-glycero-3-phosphoethanolamine(in) = a 1,2-diacyl-sn-glycero-3-phosphoethanolamine(out). In terms of biological role, lipid transfer protein required for autophagosome completion and peroxisome degradation. Tethers the edge of the isolation membrane (IM) to the endoplasmic reticulum (ER) and mediates direct lipid transfer from ER to IM for IM expansion. ATG2 binds to the ER exit site (ERES), which is the membrane source for autophagosome formation, using basic residues in its N-terminal region (NR) and to the expanding edge of the IM through its C-terminal region. The latter binding is assisted by an ATG18-PtdIns3P interaction. ATG2 then extracts phospholipids from the membrane source using its NR and transfers them to ATG9 to the IM through its predicted beta-sheet-rich structure for membrane expansion. In Saccharomyces cerevisiae (strain YJM789) (Baker's yeast), this protein is Autophagy-related protein 2 (ATG2).